Consider the following 2241-residue polypeptide: MMPGETHPAAPGPADLARCQGCASLQQNLNEYVEALIALKQKIINTDNLLTEYQKKCDELQFARRENSTLHHQVEQMLQKISPLQKCQEELGSLKAELEEKKSSLKLYQDTHQEYARVKEECLRTDAQKKKLEAKVKKLEEAAVKQTQDFKQLRNEKKILEKEFKKTQERLDEFSKQKNEKELRHIGTQISSDSHGSIDKRKVKVLLKELWLCVNTAHRLSGEGGRRIPEKPAKGSSAARASEQDELLPVQGGPARAADMRSFFSKLSMEMEGDFSSSESAEEELPSGASPSTEHAFCEERHSEVSGQRPDDGNRTNVYDHEHFFDDDLQAAIDFFKLPPPLLSPVPSPPPMASGSLPSSLAPESFFGEFTDSSDSDSVPPRDSMESALEDYTAESRAYFDLLEKIKRSDQYVKKPGSLEATQAVNSLTPLGFVTGRTALGEPSAAASLAQGRHWTESSEFVRDRGDSVEEAERMVEAREVDKSVQVGKGLLKHNRKLWLEMASRGPARKKEAGAGESEICFSSLGKRTFSELIESEGKTLSSKALCPSQSEFSKRTLTDGSASKSPCVTGSGRFQRRERDVRESTPQSGICAAAAGRGHSARLPSSSSATSVPVSVCSNHQTPWPGCVSVGTPAEGTCTEQKSPTRTLNTFLLRSEPTACFPKENDPENSLSTLSPKSKLGTSTFSDWKSRGLESFSTLKSTAKGHSLPQSVFPKPTGGGQCKGRGPGATLILPKSDWTSLARSQAGFTRRSSGSADSTSWHRSDVLRRGSGGSPRASSEYQQRTRLQLEKATPASQNSSLTAMHGPSGESTIPPESNAAAALLPNQVSVITKQARPRRVLGSSLEPWQPHGNTLSPAVNGGKETGLMPSVSACVGDGDPIAQVPEQIADKETPSPEVSVSWRNPICDSPSDSLLAENFSCSTDRKLPFSSEDNIFQCAMNEHLQQKPTKSPQTTQSGASRLEAGELLPSGVTSGVFPAEQVPHGPHHQADTEAPVVARESHSAPQNASAPPVVPSRGPLRARVPTVPVCPSSLSRAEEETQGTSQSSLPGASYCYTGIRERGEEDTEVEDEAVSCSEGEHEAEAVMGRRQQEQAEDSHRPLGDPEAGVGEAGHPSDVGDLTSALEECNLSTLLYIDKLSTSEVVMVLESCQLGDYSSRVSASECASKGSLSEEMNTELRQSEISRKKCGKRLWEEKLLRASEEWAESEGDDSCGRTSCQHAQCPLEVPSDVLTKTGEELDTNPVDCGGTDTEHALLESTHHSQAAEDLTEDALPEETSSPMPHTAELPDPSAVDGGGSSPLSSRSDPEHIQSSYEDEPNSGECLSIGEEGLAEPGELLTLSSDSSTPPRLEQSSDCVAETAFRYQISAVTSEVISVLINKDQDLVIEKGDNWTIISGVAISPGMEQVVLCDTLGDAASSQDQGGLDDGSMEKSPEASPSGPLPQEPPCGGDLSGAQEDISSNGQSANFDKSRLRNRPVKPSIWIRSQIYDQTLETEKVASDHTYYNWKLEPLGKNKPRSKISNKDQASKLAKTLVLNRGEVHLNEVPQPASGEGTNIKLPRSQAQPIMAGTDRSTPTNCSPDTLSKIRQEVGPPLPPLLPPLIATPPRSSQTLSPLVPNSGPSSRSSPAGHVSPLCEVPGPPVLSPWPEELQQASPLDPSPSPSTAAASGRIVSSPLQFCAATPKHALPVPGRLPSCAPGHAAVSGPQQENSVKILDTMYPELSARARTLSLLKGNMQLSRGSTVDGKVLPGRVSALLGLKAITSTSTAFVLTGGSSGADGSQGKSQDSGVQQDAGGKRTLAVSMLRSAKRLRLDNKSPEPDTREVTGEGVPEDPQGGSPLAEVVPAEEEQADVPVCSAASLLRVNPREMAESYNIAITRALRKIAESSFDLLPVIRSHVYVGNISKKPVMRDQEKEVVYEFSTTNKHLGEYLLRSILSELKIQKTSLDHSYIHALCRVYVGICRQLGDLERARLFCYSLLKEDFPESEKLTLFIANMWREVFLSQSAISEAMQLVARQRARGEVLNCLRAFLSWEKNAPIDVGIVVSKLLLTIQLCPKTEFQSSEEFGEDLSANIWEYIFAIDLLCCHQRWIWTHDNIISKELWPVMDKWIKYRKGHSNIAYTPDVIVASVLRLIGRLGQLGLKEGFPTAVKNISSVIGMFIQHAQDEDIPWGVQLAAVYALCDLSPSNPAEISKILEAWRTQTSNAIPSAIVHCLEEVGSLSADGSAGCTSKGDSAP.

Residues 22–185 adopt a coiled-coil conformation; that stretch reads CASLQQNLNE…KQKNEKELRH (164 aa). Basic and acidic residues-rich tracts occupy residues 222–233 and 296–315; these read GEGGRRIPEKPA and AFCEERHSEVSGQRPDDGNR. Disordered stretches follow at residues 222–255, 273–315, and 368–387; these read GEGGRRIPEKPAKGSSAARASEQDELLPVQGGPA, GDFS…DGNR, and GEFTDSSDSDSVPPRDSMES. At S523 the chain carries Phosphoserine. Residues 552 to 590 are disordered; that stretch reads EFSKRTLTDGSASKSPCVTGSGRFQRRERDVRESTPQSG. The segment covering 559 to 569 has biased composition (polar residues); the sequence is TDGSASKSPCV. The residue at position 676 (S676) is a Phosphoserine. Positions 703–817 are disordered; it reads TAKGHSLPQS…PSGESTIPPE (115 aa). Residues 718–728 are compositionally biased toward gly residues; the sequence is TGGGQCKGRGP. Positions 738-760 are enriched in polar residues; that stretch reads DWTSLARSQAGFTRRSSGSADST. T803 carries the post-translational modification Phosphothreonine. Phosphoserine is present on S896. Residues 971 to 1119 form a disordered region; it reads SGVTSGVFPA…VGEAGHPSDV (149 aa). The segment covering 1065 to 1074 has biased composition (acidic residues); the sequence is EEDTEVEDEA. The segment covering 1091-1104 has biased composition (basic and acidic residues); sequence RQQEQAEDSHRPLG. K1189 carries the N6-acetyllysine modification. 3 disordered regions span residues 1231 to 1328, 1419 to 1475, and 1543 to 1671; these read SDVL…CLSI, ASSQ…KSRL, and VHLN…AAAS. Positions 1252 to 1266 are enriched in basic and acidic residues; sequence DTEHALLESTHHSQA. Residues 1460–1470 show a composition bias toward polar residues; that stretch reads DISSNGQSANF. Phosphoserine is present on residues S1553 and S1582. Residues 1574–1585 show a composition bias toward polar residues; that stretch reads DRSTPTNCSPDT. Over residues 1595 to 1606 the composition is skewed to pro residues; it reads PPLPPLLPPLIA. T1607 is modified (phosphothreonine). Phosphoserine is present on residues S1657, S1662, S1664, S1666, and S1677. 2 disordered regions span residues 1777–1800 and 1812–1843; these read GSSGADGSQGKSQDSGVQQDAGGK and KRLRLDNKSPEPDTREVTGEGVPEDPQGGSPL. Polar residues predominate over residues 1781–1794; sequence ADGSQGKSQDSGVQ. Positions 1814-1829 are enriched in basic and acidic residues; sequence LRLDNKSPEPDTREVT. At S1820 the chain carries Phosphoserine.

Belongs to the ICE1 family. In terms of assembly, component of the little elongation complex (LEC), at least composed of ELL (ELL, ELL2 or ELL3), ZC3H8, ICE1 and ICE2. Interacts (via N-terminus domain) with ELL. Interacts (via C-terminus domain) with ICE2 and ZC3H8.

The protein resides in the nucleus. It is found in the cajal body. Component of the little elongation complex (LEC), a complex required to regulate small nuclear RNA (snRNA) gene transcription by RNA polymerase II and III. Specifically acts as a scaffold protein that promotes the LEC complex formation and recruitment and RNA polymerase II occupancy at snRNA genes in subnuclear bodies. The chain is Little elongation complex subunit 1 (Ice1) from Mus musculus (Mouse).